The following is a 407-amino-acid chain: Protein RecA (407 aa).

Residue 79–86 (GPESSGKT) coordinates ATP. The segment at 358 to 407 (LSLEASPEESDAKTLRRXASRGAGASSSRVQEGSAANDHFQDESTTAKLL) is disordered. A compositionally biased stretch (low complexity) spans 377 to 386 (SRGAGASSSR).

Belongs to the RecA family.

Its subcellular location is the cytoplasm. In terms of biological role, can catalyze the hydrolysis of ATP in the presence of single-stranded DNA, the ATP-dependent uptake of single-stranded DNA by duplex DNA, and the ATP-dependent hybridization of homologous single-stranded DNAs. It interacts with LexA causing its activation and leading to its autocatalytic cleavage. The polypeptide is Protein RecA (Treponema pallidum (strain Nichols)).